The chain runs to 156 residues: MPRKGPAPKRPVVADPVYGAPIVSQLVNKILLDGKKGLAEKIVYDALAGVAAKNGQDAVVTLKKALDNVRPALEVRSRRVGGSTYQVPIEVKPHRANTLALRWLTTYAKSRREKTMTERLTNEILDASNGLGAAVKRREDTHKMAESNKAFAHYRW.

It belongs to the universal ribosomal protein uS7 family. In terms of assembly, part of the 30S ribosomal subunit. Contacts proteins S9 and S11.

Its function is as follows. One of the primary rRNA binding proteins, it binds directly to 16S rRNA where it nucleates assembly of the head domain of the 30S subunit. Is located at the subunit interface close to the decoding center, probably blocks exit of the E-site tRNA. The sequence is that of Small ribosomal subunit protein uS7 from Clavibacter michiganensis subsp. michiganensis (strain NCPPB 382).